The primary structure comprises 302 residues: GATA transcription factor 28 (302 aa).

The interval 47 to 66 (NAGGMSEGVETDIPSHPGNV) is disordered. Positions 77–112 (GSEQGDQLTLSFQGQVYVFDSVLPEKVQAVLLLLGG) constitute a Tify domain. Positions 119–141 (APPGLGSPHQNNRVSSLPGTPQR) are disordered. The span at 126–141 (PHQNNRVSSLPGTPQR) shows a compositional bias: polar residues. In terms of domain architecture, CCT spans 147–189 (RLASLVRFREKRKGRNFDKKIRYTVRKEVALRMQRNKGQFTSA). A GATA-type zinc finger spans residues 217–273 (QHQEISCRHCGIGEKSTPMMRRGPAGPRTLCNACGLMWANKGAFRDLSKASPQTAQN).

The protein belongs to the type IV zinc-finger family. Class C subfamily. In terms of tissue distribution, predominantly expressed in shoot apices, inflorescences and roots.

It is found in the nucleus. Functionally, transcriptional activator that specifically binds 5'-GATA-3' or 5'-GAT-3' motifs within gene promoters. In Arabidopsis thaliana (Mouse-ear cress), this protein is GATA transcription factor 28 (GATA28).